The sequence spans 85 residues: Conotoxin MaIr94 (85 aa).

The first 22 residues, 1–22, serve as a signal peptide directing secretion; sequence MKLTCVLIITVLFLTACQLTAA. A propeptide spanning residues 23–49 is cleaved from the precursor; the sequence is GNSRDKQEDPVVRSSGEVQRSEDIKLA. Disulfide bonds link Cys-52/Cys-69, Cys-59/Cys-73, and Cys-68/Cys-84.

It belongs to the conotoxin O1 superfamily. As to expression, expressed by the venom duct.

The protein localises to the secreted. Functionally, produces no obvious effect on ionic currents when tested on the mouse dorsal rooted ganglia (DRG). The sequence is that of Conotoxin MaIr94 from Conus marmoreus (Marble cone).